Consider the following 182-residue polypeptide: MRIIGFVGMPGSGKSVASDVAREMGIRVVVMGDVVRAEARRRGLEPTDANHGMVGDELRRSEGEDAIARRCLEGLSRDETIVVDGIRSGAEVEYFRSVADRFHLIEIFTPPEQRLRRIAARGRSDDNNCGDLSEALERRDARELGWGMGEAIAAAGMRICNDCTLDEFRERIRVVLEELCRS.

8–15 serves as a coordination point for ATP; it reads GMPGSGKS.

Belongs to the UPF0200 family.

This is UPF0200 protein Mthe_1012 from Methanothrix thermoacetophila (strain DSM 6194 / JCM 14653 / NBRC 101360 / PT) (Methanosaeta thermophila).